We begin with the raw amino-acid sequence, 204 residues long: dTTP/UTP pyrophosphatase (204 aa).

The active-site Proton acceptor is the D76.

Belongs to the Maf family. YhdE subfamily. It depends on a divalent metal cation as a cofactor.

It is found in the cytoplasm. The enzyme catalyses dTTP + H2O = dTMP + diphosphate + H(+). It carries out the reaction UTP + H2O = UMP + diphosphate + H(+). Nucleoside triphosphate pyrophosphatase that hydrolyzes dTTP and UTP. May have a dual role in cell division arrest and in preventing the incorporation of modified nucleotides into cellular nucleic acids. The protein is dTTP/UTP pyrophosphatase of Salinibacter ruber (strain DSM 13855 / M31).